A 315-amino-acid chain; its full sequence is MRLLFAGTPDVAVPTLTALVADPRHEVAAVLTRPDAAVGRHRTPRPCPVAKAAEELGIPAIKATSVKSGEGHDAITSLDADVAVVVAYGGLIPADLLAVPRHGWINLHFSLLPRWRGAAPIQRAIMAGDEETGACVFQLVESLDAGPVYRTMTVPIGPMTTAGELLDELAHTATPLVIEALEDIEAGVEPTPQSVEGVTIAPQIHPDDVRVTVTAAAQEIDNLVRGVSPTPGAWAELDGKRFKILRTRCLEAGDGVPSTVATAQPGQLVATRKQLFLGTGSQPLELLQVQAFGKRAMSGADWARGADIDAGTRLR.

110 to 113 (SLLP) is a binding site for (6S)-5,6,7,8-tetrahydrofolate.

This sequence belongs to the Fmt family.

It carries out the reaction L-methionyl-tRNA(fMet) + (6R)-10-formyltetrahydrofolate = N-formyl-L-methionyl-tRNA(fMet) + (6S)-5,6,7,8-tetrahydrofolate + H(+). Its function is as follows. Attaches a formyl group to the free amino group of methionyl-tRNA(fMet). The formyl group appears to play a dual role in the initiator identity of N-formylmethionyl-tRNA by promoting its recognition by IF2 and preventing the misappropriation of this tRNA by the elongation apparatus. This is Methionyl-tRNA formyltransferase from Cutibacterium acnes (strain DSM 16379 / KPA171202) (Propionibacterium acnes).